Reading from the N-terminus, the 172-residue chain is Low molecular mass early light-inducible protein HV90, chloroplastic (172 aa).

The N-terminal 38 residues, Met-1 to Val-38, are a transit peptide targeting the chloroplast. 2 helical membrane passes run Gly-106 to Leu-126 and Phe-150 to Ile-170.

Belongs to the ELIP/psbS family.

The protein resides in the plastid. It localises to the chloroplast membrane. Functionally, probably involved in the integration of pigments into the mature pigment-protein complexes. The protein is Low molecular mass early light-inducible protein HV90, chloroplastic of Hordeum vulgare (Barley).